Reading from the N-terminus, the 244-residue chain is L-xylulose reductase (244 aa).

Methionine 1 carries the post-translational modification N-acetylmethionine. 11 to 39 (LVTGAGKGIGRSTVLALKAAGAQVVAVSR) is an NADP(+) binding site. An Omega-N-methylarginine modification is found at arginine 21. Serine 136 lines the substrate pocket. The active-site Proton acceptor is tyrosine 149. The active site involves lysine 153.

The protein belongs to the short-chain dehydrogenases/reductases (SDR) family. Homotetramer. Highly expressed in kidney and liver. Expressed in epididymis. Expressed at intermediate level in lung. Weakly expressed in brain, heart, spleen and testis.

It localises to the membrane. The enzyme catalyses xylitol + NADP(+) = L-xylulose + NADPH + H(+). Catalyzes the NADPH-dependent reduction of several pentoses, tetroses, trioses, alpha-dicarbonyl compounds and L-xylulose. Participates in the uronate cycle of glucose metabolism. May play a role in the water absorption and cellular osmoregulation in the proximal renal tubules by producing xylitol, an osmolyte, thereby preventing osmolytic stress from occurring in the renal tubules. The polypeptide is L-xylulose reductase (DCXR) (Cavia porcellus (Guinea pig)).